A 302-amino-acid polypeptide reads, in one-letter code: tRNA dimethylallyltransferase 1 (302 aa).

Position 6–13 (6–13 (GPTACGKT)) interacts with ATP. Position 8 to 13 (8 to 13 (TACGKT)) interacts with substrate. 2 interaction with substrate tRNA regions span residues 31–34 (DSRQ) and 154–158 (QRAIR).

Belongs to the IPP transferase family. In terms of assembly, monomer. Mg(2+) is required as a cofactor.

It carries out the reaction adenosine(37) in tRNA + dimethylallyl diphosphate = N(6)-dimethylallyladenosine(37) in tRNA + diphosphate. Its function is as follows. Catalyzes the transfer of a dimethylallyl group onto the adenine at position 37 in tRNAs that read codons beginning with uridine, leading to the formation of N6-(dimethylallyl)adenosine (i(6)A). The chain is tRNA dimethylallyltransferase 1 from Porphyromonas gingivalis (strain ATCC 33277 / DSM 20709 / CIP 103683 / JCM 12257 / NCTC 11834 / 2561).